The sequence spans 1955 residues: Rootletin (1955 aa).

Coiled coils occupy residues 29–58, 162–223, 284–1303, 1368–1579, and 1607–1863; these read EENR…ESIE, EENL…QQHT, LMRK…AVES, VGVT…EELR, and RRWE…RTKG. Disordered stretches follow at residues 321–341, 391–451, 504–551, 907–935, and 961–998; these read VTEN…DLKR, LTTK…KKLD, LKER…RSLK, EKLN…NEAV, and RDLE…QKTL. Composition is skewed to basic and acidic residues over residues 326-341 and 396-451; these read MKSE…DLKR and GEID…KKLD. Basic and acidic residues-rich tracts occupy residues 907 to 931, 961 to 982, and 989 to 998; these read EKLN…ESSK, RDLE…KMEL, and EDRKKEQKTL.

This sequence belongs to the rootletin family. In terms of tissue distribution, expressed in head ciliated neurons.

It is found in the cytoplasm. It localises to the cytoskeleton. The protein resides in the cilium basal body. Its subcellular location is the cilium axoneme. In terms of biological role, major structural component of the ciliary rootlet, a cytoskeletal-like structure in ciliated cells which originates from the basal body at the proximal end of a cilium and extends proximally toward the cell nucleus. Required for cilia integrity and function in sensory neurons. Maintains cilia integrity, partly by modulating the assembly and transport of intraflagellar proteins along the ciliary axoneme. Required for normal mating behavior and normal responses to environmental and chemical stimuli. The polypeptide is Rootletin (Caenorhabditis elegans).